A 142-amino-acid chain; its full sequence is Large ribosomal subunit protein uL13 (142 aa).

The protein belongs to the universal ribosomal protein uL13 family. Part of the 50S ribosomal subunit.

This protein is one of the early assembly proteins of the 50S ribosomal subunit, although it is not seen to bind rRNA by itself. It is important during the early stages of 50S assembly. The chain is Large ribosomal subunit protein uL13 from Cellvibrio japonicus (strain Ueda107) (Pseudomonas fluorescens subsp. cellulosa).